The sequence spans 117 residues: Ribosome-binding factor A (117 aa).

The protein belongs to the RbfA family. In terms of assembly, monomer. Binds 30S ribosomal subunits, but not 50S ribosomal subunits or 70S ribosomes.

It localises to the cytoplasm. One of several proteins that assist in the late maturation steps of the functional core of the 30S ribosomal subunit. Associates with free 30S ribosomal subunits (but not with 30S subunits that are part of 70S ribosomes or polysomes). Required for efficient processing of 16S rRNA. May interact with the 5'-terminal helix region of 16S rRNA. The polypeptide is Ribosome-binding factor A (Lactiplantibacillus plantarum (strain ATCC BAA-793 / NCIMB 8826 / WCFS1) (Lactobacillus plantarum)).